Reading from the N-terminus, the 315-residue chain is Ribosomal RNA small subunit methyltransferase H (315 aa).

S-adenosyl-L-methionine is bound by residues 37–39, Asp57, Tyr84, Asp105, and Gln112; that span reads AGH.

Belongs to the methyltransferase superfamily. RsmH family.

It is found in the cytoplasm. The catalysed reaction is cytidine(1402) in 16S rRNA + S-adenosyl-L-methionine = N(4)-methylcytidine(1402) in 16S rRNA + S-adenosyl-L-homocysteine + H(+). Specifically methylates the N4 position of cytidine in position 1402 (C1402) of 16S rRNA. The sequence is that of Ribosomal RNA small subunit methyltransferase H from Lachnospira eligens (strain ATCC 27750 / DSM 3376 / VPI C15-48 / C15-B4) (Eubacterium eligens).